We begin with the raw amino-acid sequence, 463 residues long: NADH dehydrogenase [ubiquinone] iron-sulfur protein 2, mitochondrial (463 aa).

The N-terminal 33 residues, 1–33 (MAALRALCGFRGVAAQVLRPGAGVRLPIQPSRG), are a transit peptide targeting the mitochondrion. The residue at position 62 (Lys-62) is an N6-acetyllysine. Arg-118 bears the Symmetric dimethylarginine mark. [4Fe-4S] cluster is bound by residues Cys-326, Cys-332, and Cys-347.

It belongs to the complex I 49 kDa subunit family. As to quaternary structure, core subunit of respiratory chain NADH dehydrogenase (Complex I) which is composed of 45 different subunits. Component of the iron-sulfur (IP) fragment of the enzyme. Interacts with NDUFAF3. Interacts with NDUFAF7. Interacts with CERS2. [4Fe-4S] cluster is required as a cofactor. Dimethylation at Arg-118 by NDUFAF7 takes place after NDUFS2 assembles into the complex I, leading to stabilize the early intermediate complex.

Its subcellular location is the mitochondrion inner membrane. It carries out the reaction a ubiquinone + NADH + 5 H(+)(in) = a ubiquinol + NAD(+) + 4 H(+)(out). In terms of biological role, core subunit of the mitochondrial membrane respiratory chain NADH dehydrogenase (Complex I) which catalyzes electron transfer from NADH through the respiratory chain, using ubiquinone as an electron acceptor. Essential for the catalytic activity and assembly of complex I. Redox-sensitive, critical component of the oxygen-sensing pathway in the pulmonary vasculature which plays a key role in acute pulmonary oxygen-sensing and hypoxic pulmonary vasoconstriction. Plays an important role in carotid body sensing of hypoxia. Essential for glia-like neural stem and progenitor cell proliferation, differentiation and subsequent oligodendrocyte or neuronal maturation. The chain is NADH dehydrogenase [ubiquinone] iron-sulfur protein 2, mitochondrial (NDUFS2) from Pan troglodytes (Chimpanzee).